Consider the following 436-residue polypeptide: Glucose-1-phosphate adenylyltransferase (436 aa).

Alpha-D-glucose 1-phosphate is bound by residues Y112, G178, 193 to 194 (EK), and S211.

Belongs to the bacterial/plant glucose-1-phosphate adenylyltransferase family. Homotetramer.

The enzyme catalyses alpha-D-glucose 1-phosphate + ATP + H(+) = ADP-alpha-D-glucose + diphosphate. It functions in the pathway glycan biosynthesis; glycogen biosynthesis. In terms of biological role, involved in the biosynthesis of ADP-glucose, a building block required for the elongation reactions to produce glycogen. Catalyzes the reaction between ATP and alpha-D-glucose 1-phosphate (G1P) to produce pyrophosphate and ADP-Glc. The polypeptide is Glucose-1-phosphate adenylyltransferase (Histophilus somni (strain 129Pt) (Haemophilus somnus)).